We begin with the raw amino-acid sequence, 43 residues long: Protein PsbN (43 aa).

Residues 5 to 27 traverse the membrane as a helical segment; it reads TLVAIFISCSLVSFTGYALYTAF.

It belongs to the PsbN family.

Its subcellular location is the plastid. The protein localises to the chloroplast thylakoid membrane. In terms of biological role, may play a role in photosystem I and II biogenesis. This is Protein PsbN from Exsertotheca crispa (Moss).